The sequence spans 376 residues: Succinyl-diaminopimelate desuccinylase (376 aa).

His67 is a Zn(2+) binding site. Asp69 is an active-site residue. A Zn(2+)-binding site is contributed by Asp100. Glu134 (proton acceptor) is an active-site residue. Residues Glu135, Glu163, and His349 each contribute to the Zn(2+) site.

This sequence belongs to the peptidase M20A family. DapE subfamily. Homodimer. Zn(2+) is required as a cofactor. Co(2+) serves as cofactor.

It catalyses the reaction N-succinyl-(2S,6S)-2,6-diaminopimelate + H2O = (2S,6S)-2,6-diaminopimelate + succinate. The protein operates within amino-acid biosynthesis; L-lysine biosynthesis via DAP pathway; LL-2,6-diaminopimelate from (S)-tetrahydrodipicolinate (succinylase route): step 3/3. Functionally, catalyzes the hydrolysis of N-succinyl-L,L-diaminopimelic acid (SDAP), forming succinate and LL-2,6-diaminopimelate (DAP), an intermediate involved in the bacterial biosynthesis of lysine and meso-diaminopimelic acid, an essential component of bacterial cell walls. This is Succinyl-diaminopimelate desuccinylase from Pseudoalteromonas atlantica (strain T6c / ATCC BAA-1087).